Here is a 402-residue protein sequence, read N- to C-terminus: Putative F-box protein At3g23960 (402 aa).

Residues 1 to 23 (MRSRQLHNVSEDRETLSRRNKRS) form a disordered region. Positions 26 to 73 (SLNGHIPIDLLIEIFLKLPVKSIATCRSVSKFWTYVLGRQDFTELFLT) constitute an F-box domain.

In Arabidopsis thaliana (Mouse-ear cress), this protein is Putative F-box protein At3g23960.